Here is a 376-residue protein sequence, read N- to C-terminus: Lipid-A-disaccharide synthase (376 aa).

The protein belongs to the LpxB family.

The enzyme catalyses a lipid X + a UDP-2-N,3-O-bis[(3R)-3-hydroxyacyl]-alpha-D-glucosamine = a lipid A disaccharide + UDP + H(+). The protein operates within bacterial outer membrane biogenesis; LPS lipid A biosynthesis. In terms of biological role, condensation of UDP-2,3-diacylglucosamine and 2,3-diacylglucosamine-1-phosphate to form lipid A disaccharide, a precursor of lipid A, a phosphorylated glycolipid that anchors the lipopolysaccharide to the outer membrane of the cell. The polypeptide is Lipid-A-disaccharide synthase (Pseudomonas fluorescens (strain Pf0-1)).